Consider the following 43-residue polypeptide: Protein PsbN (43 aa).

Residues 5 to 25 traverse the membrane as a helical segment; the sequence is TLISVFVASLVIGITAYAIFV.

Belongs to the PsbN family.

The protein resides in the plastid. Its subcellular location is the chloroplast thylakoid membrane. Functionally, may play a role in photosystem I and II biogenesis. The protein is Protein PsbN of Cyanidioschyzon merolae (strain NIES-3377 / 10D) (Unicellular red alga).